The primary structure comprises 383 residues: Corticosteroid-binding globulin (383 aa).

2 N-linked (GlcNAc...) asparagine glycosylation sites follow: asparagine 74 and asparagine 154. Residue glutamine 232 coordinates cortisol. N-linked (GlcNAc...) asparagine glycosylation is present at asparagine 238. Residue glutamine 264 participates in cortisol binding. N-linked (GlcNAc...) asparagine glycosylation is present at asparagine 308. Residue tryptophan 371 participates in cortisol binding.

It belongs to the serpin family. In terms of tissue distribution, produced and secreted by hepatocytes, but has also been identified in a number of glycocorticoid responsive cells (it is found in maternal lung, spleen, and ovary and fetal kidney).

The protein localises to the secreted. Major transport protein for glucocorticoids and progestins in the blood of almost all vertebrate species. The sequence is that of Corticosteroid-binding globulin (SERPINA6) from Oryctolagus cuniculus (Rabbit).